Consider the following 147-residue polypeptide: VVCVICLEKPKYRCPACRVPYCSVACFRKHKEQCNPEARPVEKKIRSALPTKTXKPVENKDDDDSIADFLNSDEEEDRVSLQNLKNLGKSATLRSLLLNPHLRQLMVNLDQGEDKAKLMRAYMQEPLFVEFADCCLGIVEPSQNEDS.

Positions 3, 6, 14, 17, 22, 26, 30, and 34 each coordinate Zn(2+). Residues 3-34 form an HIT-type zinc finger; the sequence is CVICLEKPKYRCPACRVPYCSVACFRKHKEQC. A disordered region spans residues 45–67; sequence IRSALPTKTXKPVENKDDDDSIA. A Phosphoserine modification is found at serine 72.

Thyroid receptor interacting proteins (TRIPs) specifically interact with the ligand binding domain of the thyroid receptor (TR). Requires the presence of thyroid hormone for its interaction. Interacts with NUFIP1. Interacts (via HIT-type zinc finger) with the RUVBL1/RUVBL2 complex in the presence of ADP.

It is found in the cytoplasm. The protein resides in the nucleus. In Macaca mulatta (Rhesus macaque), this protein is Zinc finger HIT domain-containing protein 3 (ZNHIT3).